Consider the following 186-residue polypeptide: Myosin light chain 1, skeletal muscle isoform (186 aa).

Met1 carries the blocked amino end (Met) modification. The segment at 1–26 (MPKAPAKKAEPAPAPAPAPEPAPAPA) is disordered. Residues 12–26 (APAPAPAPEPAPAPA) are compositionally biased toward pro residues. EF-hand domains are found at residues 42-77 (DQIE…LGQN) and 119-154 (AGFE…LGEK).

In terms of assembly, myosin is a hexamer of 2 heavy chains and 4 light chains.

This Chelon ramada (Thin-lipped grey mullet) protein is Myosin light chain 1, skeletal muscle isoform.